Reading from the N-terminus, the 119-residue chain is MSRVKRGVTNRAKHKKVLKAAKGYYGMRGSAFRIARQQVIKSGQYAYAHRRLRKREFRSLWIQRINAAARQHGLSYSRLMNGLQQAGIEVDRKQLADLAVHEPQSFAALAERAQGALSN.

The protein belongs to the bacterial ribosomal protein bL20 family.

Binds directly to 23S ribosomal RNA and is necessary for the in vitro assembly process of the 50S ribosomal subunit. It is not involved in the protein synthesizing functions of that subunit. This is Large ribosomal subunit protein bL20 from Halorhodospira halophila (strain DSM 244 / SL1) (Ectothiorhodospira halophila (strain DSM 244 / SL1)).